Consider the following 485-residue polypeptide: Membrane-bound lytic murein transglycosylase F (485 aa).

An N-terminal signal peptide occupies residues 1-29 (MFAHTALRQRCAKWLFATGLFLLLGACVE). The non-LT domain stretch occupies residues 30 to 267 (KPSTLERVKE…RLKDRYYGHV (238 aa)). The interval 268-485 (DVLGYVGAYT…DKPAEQSPPM (218 aa)) is LT domain. Residue Glu314 is part of the active site. The interval 465–485 (EGNLHVPGVNKDKPAEQSPPM) is disordered.

This sequence in the N-terminal section; belongs to the bacterial solute-binding protein 3 family. The protein in the C-terminal section; belongs to the transglycosylase Slt family.

The protein localises to the cell outer membrane. It catalyses the reaction Exolytic cleavage of the (1-&gt;4)-beta-glycosidic linkage between N-acetylmuramic acid (MurNAc) and N-acetylglucosamine (GlcNAc) residues in peptidoglycan, from either the reducing or the non-reducing ends of the peptidoglycan chains, with concomitant formation of a 1,6-anhydrobond in the MurNAc residue.. In terms of biological role, murein-degrading enzyme that degrades murein glycan strands and insoluble, high-molecular weight murein sacculi, with the concomitant formation of a 1,6-anhydromuramoyl product. Lytic transglycosylases (LTs) play an integral role in the metabolism of the peptidoglycan (PG) sacculus. Their lytic action creates space within the PG sacculus to allow for its expansion as well as for the insertion of various structures such as secretion systems and flagella. The sequence is that of Membrane-bound lytic murein transglycosylase F from Pseudomonas putida (strain W619).